Reading from the N-terminus, the 237-residue chain is C-type lectin domain family 4 member A (237 aa).

At 1-48 the chain is on the cytoplasmic side; it reads MTSEITYAEVRFKNEFKSSGINTASSAASKERTAPHKSNTGFPKLLCA. The ITIM motif motif lies at 5–10; it reads ITYAEV. The helical; Signal-anchor for type II membrane protein transmembrane segment at 49–69 threads the bilayer; the sequence is SLLIFFLLLAISFFIAFVIFF. Topologically, residues 70–237 are extracellular; sequence QKYSQLLEKK…SVCEMMKIHL (168 aa). Disulfide bonds link cysteine 106-cysteine 117, cysteine 134-cysteine 230, and cysteine 203-cysteine 222. The region spanning 113–231 is the C-type lectin domain; that stretch reads FSSNCYFIST…CLGPQRSVCE (119 aa). Positions 143, 145, and 149 each coordinate Ca(2+). An N-linked (GlcNAc...) asparagine glycan is attached at asparagine 185. Glutamate 195, serine 197, and glutamate 201 together coordinate Ca(2+). Residues 195–197 and glutamate 201 each bind alpha-D-mannopyranose; that span reads EPS. 207 to 209 is a binding site for N-acetyl-D-glucosamine; that stretch reads NFR. Ca(2+) is bound by residues asparagine 218, aspartate 219, and glutamate 231.

May interact with PTPN6 via its ITIM motif. As to expression, expressed preferentially in hematopoietic tissues. Expressed in all circulating Ag-presenting cells such as dendritic cells, myeloid cells, monocytes, macrophages, B-cells and epidermal Langerhans cells (at protein level). Expressed in peripheral blood leukocytes, neutrophils, moderate quantities in spleen, lymph node, and bone marrow, and at very low levels in thymus.

Its subcellular location is the cell membrane. C-type lectin receptor that binds carbohydrates mannose and fucose but also weakly interacts with N-acetylglucosamine (GlcNAc) in a Ca(2+)-dependent manner. Involved in regulating immune reactivity. Once triggered by antigen, it is internalized by clathrin-dependent endocytosis and delivers its antigenic cargo into the antigen presentation pathway resulting in cross-priming of CD8(+) T cells. This cross-presentation and cross-priming are enhanced by TLR7 and TLR8 agonists with increased expansion of the CD8(+) T cells, high production of IFNG and TNF with reduced levels of IL4, IL5 and IL13. In plasmacytoid dendritic cells, inhibits TLR9-mediated IFNA and TNF production. May be involved via its ITIM motif (immunoreceptor tyrosine-based inhibitory motifs) in the inhibition of B-cell-receptor-mediated calcium mobilization and protein tyrosine phosphorylation. Functionally, (Microbial infection) Involved in the interaction between HIV-1 virus and dendritic cells. Enhances HIV-1 binding/entry and virus infection. Requires ITIM motif-associated signal transduction pathway involving phosphatases PTPN6 and PTPN11, SYK, Src kinases and MAP kinases. In Homo sapiens (Human), this protein is C-type lectin domain family 4 member A.